The following is a 666-amino-acid chain: UvrABC system protein B (666 aa).

Residues 25–412 form the Helicase ATP-binding domain; it reads NGIKNNNKWQ…SENIAEQVIR (388 aa). ATP is bound at residue 38-45; it reads GVTGSGKT. Positions 91 to 114 match the Beta-hairpin motif; it reads YYDYYQPEAYVAQTDTYIEKDASI. Residues 429-595 form the Helicase C-terminal domain; the sequence is QIDDLYSEIK…TIKKAVRDVI (167 aa). The UVR domain occupies 622-657; it reads DKLIKEFEKEMKEAAKELQFEKAAYFRDKVNELKKK.

Belongs to the UvrB family. Forms a heterotetramer with UvrA during the search for lesions. Interacts with UvrC in an incision complex.

Its subcellular location is the cytoplasm. In terms of biological role, the UvrABC repair system catalyzes the recognition and processing of DNA lesions. A damage recognition complex composed of 2 UvrA and 2 UvrB subunits scans DNA for abnormalities. Upon binding of the UvrA(2)B(2) complex to a putative damaged site, the DNA wraps around one UvrB monomer. DNA wrap is dependent on ATP binding by UvrB and probably causes local melting of the DNA helix, facilitating insertion of UvrB beta-hairpin between the DNA strands. Then UvrB probes one DNA strand for the presence of a lesion. If a lesion is found the UvrA subunits dissociate and the UvrB-DNA preincision complex is formed. This complex is subsequently bound by UvrC and the second UvrB is released. If no lesion is found, the DNA wraps around the other UvrB subunit that will check the other stand for damage. This is UvrABC system protein B from Clostridium acetobutylicum (strain ATCC 824 / DSM 792 / JCM 1419 / IAM 19013 / LMG 5710 / NBRC 13948 / NRRL B-527 / VKM B-1787 / 2291 / W).